A 404-amino-acid chain; its full sequence is Dual-specificity RNA methyltransferase RlmN (404 aa).

The active-site Proton acceptor is E119. Residues 126-358 (VGRAGALCVS…NKAGYSSPIR (233 aa)) enclose the Radical SAM core domain. A disulfide bridge connects residues C133 and C369. Residues C140, C144, and C147 each contribute to the [4Fe-4S] cluster site. S-adenosyl-L-methionine-binding positions include 195-196 (GE), S227, 249-251 (SLH), and N326. Residue C369 is the S-methylcysteine intermediate of the active site.

Belongs to the radical SAM superfamily. RlmN family. It depends on [4Fe-4S] cluster as a cofactor.

It localises to the cytoplasm. The catalysed reaction is adenosine(2503) in 23S rRNA + 2 reduced [2Fe-2S]-[ferredoxin] + 2 S-adenosyl-L-methionine = 2-methyladenosine(2503) in 23S rRNA + 5'-deoxyadenosine + L-methionine + 2 oxidized [2Fe-2S]-[ferredoxin] + S-adenosyl-L-homocysteine. It carries out the reaction adenosine(37) in tRNA + 2 reduced [2Fe-2S]-[ferredoxin] + 2 S-adenosyl-L-methionine = 2-methyladenosine(37) in tRNA + 5'-deoxyadenosine + L-methionine + 2 oxidized [2Fe-2S]-[ferredoxin] + S-adenosyl-L-homocysteine. Functionally, specifically methylates position 2 of adenine 2503 in 23S rRNA and position 2 of adenine 37 in tRNAs. m2A2503 modification seems to play a crucial role in the proofreading step occurring at the peptidyl transferase center and thus would serve to optimize ribosomal fidelity. This is Dual-specificity RNA methyltransferase RlmN from Caulobacter sp. (strain K31).